The sequence spans 395 residues: Protein hedgehog (395 aa).

The N-terminal stretch at 1-26 (MDNHSSVPWASAASVTCLSLDAKCHS) is a signal peptide. Low complexity predominate over residues 26-43 (SSSSSCSSKSTASSISAS). The segment at 26-46 (SSSSSCSSKSTASSISASPET) is disordered. Positions 27-82 (SSSSCSSKSTASSISASPETQTMRHIAHTQRCLSRLTSLVALLLIVLPMMFSPAHS) are excised as a propeptide. Residue Cys83 is the site of N-palmitoyl cysteine attachment. Positions 147, 148, 153, 183, 184, 187, and 189 each coordinate Ca(2+). The Cholesterol glycine ester moiety is linked to residue Gly255.

It belongs to the hedgehog family. In terms of assembly, interacts with shf. The C-terminal part of the hedgehog protein precursor displays an autoproteolysis activity that results in the cleavage of the full-length protein into two parts (N-product and C-product). In addition, the C-terminal part displays a cholesterol transferase activity that results by the covalent attachment of a cholesterol moiety to the C-terminal of the newly generated N-product. The N-product is the active species in both local and long-range signaling, whereas the C-product has no signaling activity. In terms of processing, cholesterylation is required for N-product targeting to lipid rafts and multimerization. Post-translationally, N-palmitoylation by Rasp of the hedgehog N-product, within the secretory pathway, is required for the embryonic and larval patterning activities of the hedgehog signal.

It localises to the nucleus. The protein localises to the cytoplasm. The protein resides in the cell membrane. The enzyme catalyses glycyl-L-cysteinyl-[protein] + cholesterol + H(+) = [protein]-C-terminal glycyl cholesterol ester + N-terminal L-cysteinyl-[protein]. Its function is as follows. The C-terminal part of the hedgehog protein precursor displays an autoproteolysis activity that results in the cleavage of the full-length protein into two parts (N-product and C-product). In addition, the C-terminal part displays a cholesterol transferase activity that results by the covalent attachment of a cholesterol moiety to the C-terminal of the newly generated N-product. Once cleaved, the C-product has no signaling activity and diffuses from the cell. In terms of biological role, the dually lipidated hedgehog protein N-product is a morphogen which is essential for a variety of patterning events during development. Establishes the anterior-posterior axis of the embryonic segments and patterns the larval imaginal disks. Binds to the patched (ptc) receptor, which functions in association with smoothened (smo), to activate the transcription of target genes wingless (wg), decapentaplegic (dpp) and ptc. In the absence of hh, ptc represses the constitutive signaling activity of smo through fused (fu). Essential component of a signaling pathway which regulates the Duox-dependent gut immune response to bacterial uracil; required to activate Cad99C-dependent endosome formation, norpA-dependent Ca2+ mobilization and p38 MAPK, which are essential steps in the Duox-dependent production of reactive oxygen species (ROS) in response to intestinal bacterial infection. During photoreceptor differentiation, it up-regulates transcription of Ubr3, which in turn promotes the hh-signaling pathway by mediating the ubiquitination and degradation of cos. This is Protein hedgehog from Drosophila simulans (Fruit fly).